The sequence spans 279 residues: Phosphatidylglycerol--prolipoprotein diacylglyceryl transferase (279 aa).

Transmembrane regions (helical) follow at residues 18-38 (LSVRWYGIIIAVGILLGYFVA), 55-75 (IIFYSALFGFIAARIYFVIFQ), and 89-109 (IWHGGIAIHGGLIGGFIAGVI). Residue R137 participates in a 1,2-diacyl-sn-glycero-3-phospho-(1'-sn-glycerol) binding. The next 2 helical transmembrane spans lie at 203-223 (LGETFFLYLTWYSIGRFFIEG) and 235-255 (IRVAQLVSILLILISISLIVY).

It belongs to the Lgt family.

It is found in the cell membrane. It carries out the reaction L-cysteinyl-[prolipoprotein] + a 1,2-diacyl-sn-glycero-3-phospho-(1'-sn-glycerol) = an S-1,2-diacyl-sn-glyceryl-L-cysteinyl-[prolipoprotein] + sn-glycerol 1-phosphate + H(+). It functions in the pathway protein modification; lipoprotein biosynthesis (diacylglyceryl transfer). In terms of biological role, catalyzes the transfer of the diacylglyceryl group from phosphatidylglycerol to the sulfhydryl group of the N-terminal cysteine of a prolipoprotein, the first step in the formation of mature lipoproteins. The sequence is that of Phosphatidylglycerol--prolipoprotein diacylglyceryl transferase from Staphylococcus aureus (strain Mu3 / ATCC 700698).